The sequence spans 486 residues: Dipeptide and tripeptide permease B (486 aa).

Topologically, residues 1–27 (MNKPVSIGLLQQPKPFFMIFFVELWER) are cytoplasmic. The helical transmembrane segment at 28 to 48 (FGYYGVQGVLTVYFVQKLGFS) threads the bilayer. The Periplasmic segment spans residues 49-52 (QEQA). A helical transmembrane segment spans residues 53–73 (FITFGAFAALVFGLISIGGYV). The Cytoplasmic segment spans residues 74 to 82 (GDHLLGTKR). A helical transmembrane segment spans residues 83–103 (TIVLGAIVLAIGYFMTGLSIL). Residues 104 to 106 (HPN) lie on the Periplasmic side of the membrane. Residues 107–127 (LIFYALGTIAVGNGLFKANPA) traverse the membrane as a helical segment. The Cytoplasmic portion of the chain corresponds to 128–146 (SLLSKCYPPKDPRLDGAFT). The chain crosses the membrane as a helical span at residues 147–167 (LFYMSINLGSLFSLALAPVIA). The Periplasmic portion of the chain corresponds to 168–172 (EKFSY). A helical membrane pass occupies residues 173–193 (AVTYNICGIGLIIALLVYIFC). Topologically, residues 194–211 (RNTVRNIGSEPDHQRINY) are cytoplasmic. The helical transmembrane segment at 212-232 (TNLFLVVAGSVVMVYVCAWLM) threads the bilayer. His-233 is a topological domain (periplasmic). A helical membrane pass occupies residues 234–254 (NVKIANIMLITLSVIVVFIFF). Topologically, residues 255–267 (REALKQDKIGRNK) are cytoplasmic. The chain crosses the membrane as a helical span at residues 268–288 (MFVAFILMLQAIVFFILYAQM). Residues 289-311 (PTSLNFFAIHNVHHQLLGFNINP) lie on the Periplasmic side of the membrane. A helical membrane pass occupies residues 312 to 332 (VSFQALNPFWIVVASPILAVL). Over 333-348 (YTHWGAKGKDLTMPAK) the chain is Cytoplasmic. Residues 349–369 (FAVGMFLCSLGFLTAAAAGLW) form a helical membrane-spanning segment. The Periplasmic portion of the chain corresponds to 370–375 (FADEQG). The chain crosses the membrane as a helical span at residues 376-396 (LTSAWFIVLVYLFQGVGELMI). At 397–419 (SALGLAMIAALVPQYLMGFILGM) the chain is on the cytoplasmic side. The chain crosses the membrane as a helical span at residues 420 to 440 (WYLTQATSSLLGGYVAALTAA). Residues 441–456 (PKGITDPLQTLPVYTS) lie on the Periplasmic side of the membrane. The helical transmembrane segment at 457 to 477 (VFGKIGIATFIVAIIMAATVP) threads the bilayer. Residues 478–486 (LLNRMMQEK) lie on the Cytoplasmic side of the membrane.

The protein belongs to the major facilitator superfamily. Proton-dependent oligopeptide transporter (POT/PTR) (TC 2.A.17) family. DtpB subfamily.

Its subcellular location is the cell inner membrane. Proton-dependent permease that transports di- and tripeptides. The protein is Dipeptide and tripeptide permease B of Photorhabdus luminescens (Xenorhabdus luminescens).